Reading from the N-terminus, the 123-residue chain is MARVTVEDCLDNVDNRFELVLAGAKRARQLAKGIEPLVDWENDKPTVVALREIAAGHVTSEILTSTEESAADSLSLGGFSTADVEAEVGGGPVQPDPGASQERAFDEAADGTAQGSGDPDPTT.

The disordered stretch occupies residues 67 to 123; it reads EESAADSLSLGGFSTADVEAEVGGGPVQPDPGASQERAFDEAADGTAQGSGDPDPTT.

Belongs to the RNA polymerase subunit omega family. As to quaternary structure, the RNAP catalytic core consists of 2 alpha, 1 beta, 1 beta' and 1 omega subunit. When a sigma factor is associated with the core the holoenzyme is formed, which can initiate transcription.

It catalyses the reaction RNA(n) + a ribonucleoside 5'-triphosphate = RNA(n+1) + diphosphate. Functionally, promotes RNA polymerase assembly. Latches the N- and C-terminal regions of the beta' subunit thereby facilitating its interaction with the beta and alpha subunits. This chain is DNA-directed RNA polymerase subunit omega, found in Halorhodospira halophila (strain DSM 244 / SL1) (Ectothiorhodospira halophila (strain DSM 244 / SL1)).